Here is a 313-residue protein sequence, read N- to C-terminus: Putative adhesin P1-like protein MPN_202 (313 aa).

The span at 1 to 16 shows a compositional bias: low complexity; sequence MGSQNQGSTTTTSAGN. A disordered region spans residues 1–44; the sequence is MGSQNQGSTTTTSAGNPDSLVTDKVDQKGQVQTSGQNLSDTNYT. Polar residues predominate over residues 29 to 44; it reads GQVQTSGQNLSDTNYT.

The protein belongs to the adhesin P1 family.

The protein is Putative adhesin P1-like protein MPN_202 of Mycoplasma pneumoniae (strain ATCC 29342 / M129 / Subtype 1) (Mycoplasmoides pneumoniae).